The sequence spans 936 residues: Protein NNF2 (936 aa).

At 1-41 the chain is on the lumenal side; that stretch reads MEEQFTNQKKVSHLQSLMNTKRSEQPTEFAKKHRFKDTLAL. Lys10 participates in a covalent cross-link: Glycyl lysine isopeptide (Lys-Gly) (interchain with G-Cter in ubiquitin). The chain crosses the membrane as a helical span at residues 42–62; the sequence is FLVFLSFNHFTSLCLLVSFIV. Topologically, residues 63 to 120 are cytoplasmic; that stretch reads ATKCKDFLANCFIILFLSKKPSRHIGEVAHIDISTSKVTNGSSNRKSNSRFFGNSKNS. The helical transmembrane segment at 121 to 141 threads the bilayer; that stretch reads FVIPIPVLICEILFAMLLKIY. Over 142 to 245 the chain is Lumenal; the sequence is GGDYFVKPIK…FKMLGKHSDS (104 aa). The helical transmembrane segment at 246–266 threads the bilayer; the sequence is MIYYLSFHILFFSFASSLLHP. At 267–936 the chain is on the cytoplasmic side; sequence HRQTAENKPL…NIHSLIGNSY (670 aa). Disordered regions lie at residues 297-351, 387-437, and 512-533; these read RISS…SNIL, GSNS…DFFS, and TSENSLTPTNSNTSYVSNQEKH. Over residues 299–308 the composition is skewed to low complexity; that stretch reads SSSSSVSADS. Residues 325 to 351 show a composition bias toward polar residues; sequence LSSSNQTIHPSQQNNSPVPLSSHSNIL. Composition is skewed to low complexity over residues 394–405 and 414–428; these read TTTTSTTTSPTT and SLSNEISLSDSSNGN. Polar residues predominate over residues 512 to 529; that stretch reads TSENSLTPTNSNTSYVSN.

It is found in the endoplasmic reticulum membrane. The protein is Protein NNF2 (NNF2) of Saccharomyces cerevisiae (strain ATCC 204508 / S288c) (Baker's yeast).